Reading from the N-terminus, the 682-residue chain is T-box brain protein 1 (682 aa).

Disordered stretches follow at residues 43-83 and 108-127; these read TDNL…RSKL and SQSS…FPYP. A compositionally biased stretch (polar residues) spans 58–68; that stretch reads GMTNQSDTDNF. Residues 108–122 are compositionally biased toward low complexity; the sequence is SQSSQPQSAATAPSA. Positions 213-393 form a DNA-binding region, T-box; the sequence is LWLKFHRHQT…HNPFAKGFRD (181 aa). A Phosphothreonine modification is found at T408. Phosphoserine is present on S410. Disordered regions lie at residues 447–483 and 588–658; these read PGAG…SPQR and GLAA…KSEV. A compositionally biased stretch (polar residues) spans 462 to 472; the sequence is PHTNGLLSPQQ. S594 bears the Phosphoserine mark. The segment covering 619–629 has biased composition (low complexity); the sequence is SSIKSIDSSDS. Residue S641 is modified to Phosphoserine.

Homodimer. Part of a complex containing CASK, TBR1 and TSPYL2; may modulate gene expression in response to neuronal synaptic activity. Interacts with FOXP2. Interacts with FOXP1. Interacts with BCL11A. As to expression, brain.

It localises to the nucleus. Functionally, transcriptional repressor involved in multiple aspects of cortical development, including neuronal migration, laminar and areal identity, and axonal projection. As transcriptional repressor of FEZF2, it blocks the formation of the corticospinal (CS) tract from layer 6 projection neurons, thereby restricting the origin of CS axons specifically to layer 5 neurons. This chain is T-box brain protein 1 (TBR1), found in Homo sapiens (Human).